The sequence spans 629 residues: Putrebactin synthase (629 aa).

This sequence belongs to the IucA/IucC family. Homodimer.

It carries out the reaction 2 N-(3-carboxypropanoyl)-N-hydroxyputrescine + 2 ATP = putrebactin + 2 AMP + 2 diphosphate + 2 H(+). The catalysed reaction is 2 N-(3-carboxypropanoyl)-N-hydroxyputrescine + ATP = pre-putrebactin + AMP + diphosphate + H(+). The enzyme catalyses pre-putrebactin + ATP = putrebactin + AMP + diphosphate + H(+). It participates in siderophore biosynthesis. Its activity is regulated as follows. Requires Mg(2+) for activity. Its function is as follows. Ligase involved in the biosynthesis of the siderophore putrebactin. Catalyzes the ATP-dependent head-to-tail dimerization of N-hydroxy-N-succinyl-putrescine (HSP) to give pre-putrebactin and subsequent macrocyclization of pre-putrebactin to give putrebactin. This is Putrebactin synthase from Shewanella sp. (strain MR-4).